A 278-amino-acid chain; its full sequence is Bifunctional protein FolD (278 aa).

NADP(+) is bound by residues 165–167 (GRS) and serine 190.

This sequence belongs to the tetrahydrofolate dehydrogenase/cyclohydrolase family. Homodimer.

It carries out the reaction (6R)-5,10-methylene-5,6,7,8-tetrahydrofolate + NADP(+) = (6R)-5,10-methenyltetrahydrofolate + NADPH. The catalysed reaction is (6R)-5,10-methenyltetrahydrofolate + H2O = (6R)-10-formyltetrahydrofolate + H(+). The protein operates within one-carbon metabolism; tetrahydrofolate interconversion. Catalyzes the oxidation of 5,10-methylenetetrahydrofolate to 5,10-methenyltetrahydrofolate and then the hydrolysis of 5,10-methenyltetrahydrofolate to 10-formyltetrahydrofolate. The chain is Bifunctional protein FolD from Clostridium tetani (strain Massachusetts / E88).